The chain runs to 423 residues: F-box protein At1g52495 (423 aa).

One can recognise an F-box domain in the interval 49–95 (KLKDVHLPLDLIVEILKKLPTKSLMRFRCVSKPWSFIISKRRDFVES).

The protein is F-box protein At1g52495 of Arabidopsis thaliana (Mouse-ear cress).